Reading from the N-terminus, the 312-residue chain is MKVAVLGAAGGIGQALALLLKTQLPSGSELSLYDIAPVTPGVAVDLSHIPTAVKVCGFGGEDASPALVGADIVLISAGVARKPGMDRSDLFNVNAGIIRNLIGQVARTSPNACIGIITNPVNTMVPIAAEVLKKAGVYNPNKLFGVTTLDIIRSNTFVGELKHLDPATLDIPVIGGHSGVTILPLLSQIPGVSLSEREVAELTKRIQNAGTEVVEAKAGGGSATLAMGQAAARFALSLVRAMQGDENVVECGYVESDGEYARFFAQPLLLGKAGLVQRLSIGTLSAFEQDALESMLEVLRKDIALGEDFINK.

NAD(+)-binding positions include 7–13 and Asp34; that span reads GAAGGIG. Residues Arg81 and Arg87 each contribute to the substrate site. Residues Asn94 and 117–119 contribute to the NAD(+) site; that span reads ITN. Substrate-binding residues include Asn119 and Arg153. Catalysis depends on His177, which acts as the Proton acceptor. Met227 serves as a coordination point for NAD(+).

Belongs to the LDH/MDH superfamily. MDH type 1 family. As to quaternary structure, homodimer.

It carries out the reaction (S)-malate + NAD(+) = oxaloacetate + NADH + H(+). Catalyzes the reversible oxidation of malate to oxaloacetate. The polypeptide is Malate dehydrogenase (Edwardsiella ictaluri (strain 93-146)).